Consider the following 168-residue polypeptide: Alpha-amylase/trypsin inhibitor CM3 (168 aa).

The N-terminal stretch at 1 to 25 (MACKSSCSLLLLAAVLLSVLAAASA) is a signal peptide.

The protein belongs to the protease inhibitor I6 (cereal trypsin/alpha-amylase inhibitor) family. As to quaternary structure, subunit of the tetrameric inhibitor. Five disulfide bonds, which are essential for the inhibitor activity, are probably present. As to expression, developing endosperm.

It is found in the secreted. Its function is as follows. Alpha-amylase/trypsin inhibitor. It could be involved in insect defense mechanisms. The polypeptide is Alpha-amylase/trypsin inhibitor CM3 (Triticum aestivum (Wheat)).